The following is a 766-amino-acid chain: Tetratricopeptide repeat protein 14 (766 aa).

A disordered region spans residues 35–55 (LGTAAEPARGAAPPPGAGRKE). The 83-residue stretch at 125 to 207 (GDIVIGRISS…YHEKLAVSLY (83 aa)) folds into the S1 motif domain. 4 TPR repeats span residues 209–242 (SSLP…NSNS), 306–339 (ALKC…DKQN), 341–373 (EALV…CPTH), and 381–414 (CQTL…DETF). The disordered stretch occupies residues 463 to 743 (EEKRLKKKRR…PDSRVKKNLP (281 aa)). A compositionally biased stretch (low complexity) spans 475–496 (SSSSSVSSADESVSSSSSSSSS). Positions 497 to 506 (SHKRHKKSKR) are enriched in basic residues. Positions 539 to 550 (PTNTSASFLNQK) are enriched in polar residues. Basic and acidic residues predominate over residues 551 to 562 (QEVEKLLEKQDR). Polar residues predominate over residues 594–605 (FYNSYKTQAGSS). 2 stretches are compositionally biased toward basic and acidic residues: residues 606-616 (KTEKPYKSERH) and 629-657 (NSED…RRWE). Over residues 661 to 673 (VKYSTSPASSDYS) the composition is skewed to polar residues. Residue serine 666 is modified to Phosphoserine. Residues 707-738 (RVYEKEDSCGEGNRNEAPEEMLNSKEQPDSRV) show a composition bias toward basic and acidic residues.

Belongs to the TTC14 family.

The chain is Tetratricopeptide repeat protein 14 from Mus musculus (Mouse).